The primary structure comprises 398 residues: ATP-dependent RNA helicase eIF4A (398 aa).

The short motif at 25–53 is the Q motif element; sequence DSFDSMDLKPELLRGVYAYGFERPSAIQQ. The 171-residue stretch at 56 to 226 folds into the Helicase ATP-binding domain; the sequence is IKPIIAGHDV…TKFMRDPIRI (171 aa). 69-76 contacts ATP; it reads AQSGTGKT. Residues 174 to 177 carry the DEAD box motif; the sequence is DEAD. Positions 237–398 constitute a Helicase C-terminal domain; the sequence is GIKQFYIAVE…EMPMNVADLI (162 aa).

The protein belongs to the DEAD box helicase family. eIF4A subfamily. As to quaternary structure, component of the eIF4F complex, which composition varies with external and internal environmental conditions. It is composed of at least eIF4A, eIF4E and eIF4G.

The protein resides in the cytoplasm. The catalysed reaction is ATP + H2O = ADP + phosphate + H(+). ATP-dependent RNA helicase which is a subunit of the eIF4F complex involved in cap recognition and is required for mRNA binding to ribosome. In the current model of translation initiation, eIF4A unwinds RNA secondary structures in the 5'-UTR of mRNAs which is necessary to allow efficient binding of the small ribosomal subunit, and subsequent scanning for the initiator codon. This chain is ATP-dependent RNA helicase eIF4A (tif1), found in Aspergillus niger (strain ATCC MYA-4892 / CBS 513.88 / FGSC A1513).